Reading from the N-terminus, the 155-residue chain is Small ribosomal subunit protein uS7cz/uS7cy (155 aa).

Belongs to the universal ribosomal protein uS7 family. Part of the 30S ribosomal subunit.

The protein resides in the plastid. It localises to the chloroplast. Functionally, one of the primary rRNA binding proteins, it binds directly to 16S rRNA where it nucleates assembly of the head domain of the 30S subunit. The polypeptide is Small ribosomal subunit protein uS7cz/uS7cy (rps7-A) (Pelargonium hortorum (Common geranium)).